Reading from the N-terminus, the 1001-residue chain is E3 ubiquitin-protein ligase BRE1B (1001 aa).

The disordered stretch occupies residues 1–40 (MSGLSNKRAAGDGGSGPPEKKMNREEKTTTTLIEPIRLGG). Residues 18–28 (PEKKMNREEKT) show a composition bias toward basic and acidic residues. N6-acetyllysine is present on lysine 20. At serine 42 the chain carries Phosphoserine. Residues 55–91 (KNKKLAERLEQRQACEDELRERIEKLEKRQATDDATL) are a coiled coil. A disordered region spans residues 122–142 (TEVPGCQEGLTRDVIPRPDPG). Coiled coils occupy residues 189–377 (KAAV…LRSL) and 437–525 (LQKK…ASGS). An N6-acetyllysine mark is found at lysine 355 and lysine 517. The disordered stretch occupies residues 519–647 (RAQASGSSHC…KAKVEEAKRK (129 aa)). The segment covering 565-576 (ALLAGATSATSS) has biased composition (low complexity). Glycyl lysine isopeptide (Lys-Gly) (interchain with G-Cter in SUMO2) cross-links involve residues lysine 578 and lysine 579. A phosphoserine mark is found at serine 584 and serine 585. 2 stretches are compositionally biased toward basic and acidic residues: residues 602-619 (RGRE…EREG) and 633-647 (RADR…AKRK). Residues 627–946 (AASTLSRADR…EEIKEYKARL (320 aa)) adopt a coiled-coil conformation. The segment at 948 to 987 (CPCCNTRKKDAVLTKCFHVFCFECVRGRYEARQRKCPKCN) adopts an RING-type zinc-finger fold.

Belongs to the BRE1 family. As to quaternary structure, component of the RNF20/40 complex (also known as BRE1 complex) probably composed of 2 copies of RNF20/BRE1A and 2 copies of RNF40/BRE1B. Interacts with UBE2E1/UBCH6. Interacts with RB1 and WAC.

The protein resides in the nucleus. The catalysed reaction is S-ubiquitinyl-[E2 ubiquitin-conjugating enzyme]-L-cysteine + [acceptor protein]-L-lysine = [E2 ubiquitin-conjugating enzyme]-L-cysteine + N(6)-ubiquitinyl-[acceptor protein]-L-lysine.. It participates in protein modification; protein ubiquitination. Component of the RNF20/40 E3 ubiquitin-protein ligase complex that mediates monoubiquitination of 'Lys-120' of histone H2B (H2BK120ub1). H2BK120ub1 gives a specific tag for epigenetic transcriptional activation and is also prerequisite for histone H3 'Lys-4' and 'Lys-79' methylation (H3K4me and H3K79me, respectively). It thereby plays a central role in histone code and gene regulation. The RNF20/40 complex forms a H2B ubiquitin ligase complex in cooperation with the E2 enzyme UBE2A or UBE2B; reports about the cooperation with UBE2E1/UBCH are contradictory. Required for transcriptional activation of Hox genes. The protein is E3 ubiquitin-protein ligase BRE1B (Rnf40) of Mus musculus (Mouse).